We begin with the raw amino-acid sequence, 365 residues long: Phosphopantothenate--cysteine ligase CAB2 (365 aa).

The segment at 228-250 is disordered; the sequence is QSGDNGKMGANNDTEGTTRTTPD. The segment covering 238–248 has biased composition (polar residues); it reads NNDTEGTTRTT.

This sequence belongs to the PPC synthetase family. In terms of assembly, homodimer.

It localises to the cytoplasm. The protein localises to the nucleus. It catalyses the reaction (R)-4'-phosphopantothenate + L-cysteine + CTP = N-[(R)-4-phosphopantothenoyl]-L-cysteine + CMP + diphosphate + H(+). The protein operates within cofactor biosynthesis; coenzyme A biosynthesis; CoA from (R)-pantothenate: step 2/5. Its function is as follows. Catalyzes the first step in the biosynthesis of coenzyme A from vitamin B5, where cysteine is conjugated to 4'-phosphopantothenate to form 4-phosphopantothenoylcysteine. The polypeptide is Phosphopantothenate--cysteine ligase CAB2 (CAB2) (Saccharomyces cerevisiae (strain ATCC 204508 / S288c) (Baker's yeast)).